The primary structure comprises 81 residues: ATP synthase subunit c (81 aa).

A run of 2 helical transmembrane segments spans residues 7–27 and 55–75; these read LVAIASAILIAFGALGTAIGF and IAGLLDAVPMIGVGIGLFFIF.

Belongs to the ATPase C chain family. F-type ATPases have 2 components, F(1) - the catalytic core - and F(0) - the membrane proton channel. F(1) has five subunits: alpha(3), beta(3), gamma(1), delta(1), epsilon(1). F(0) has three main subunits: a(1), b(2) and c(10-14). The alpha and beta chains form an alternating ring which encloses part of the gamma chain. F(1) is attached to F(0) by a central stalk formed by the gamma and epsilon chains, while a peripheral stalk is formed by the delta and b chains.

It localises to the cell inner membrane. F(1)F(0) ATP synthase produces ATP from ADP in the presence of a proton or sodium gradient. F-type ATPases consist of two structural domains, F(1) containing the extramembraneous catalytic core and F(0) containing the membrane proton channel, linked together by a central stalk and a peripheral stalk. During catalysis, ATP synthesis in the catalytic domain of F(1) is coupled via a rotary mechanism of the central stalk subunits to proton translocation. Its function is as follows. Key component of the F(0) channel; it plays a direct role in translocation across the membrane. A homomeric c-ring of between 10-14 subunits forms the central stalk rotor element with the F(1) delta and epsilon subunits. This chain is ATP synthase subunit c, found in Acinetobacter baumannii (strain ACICU).